Consider the following 864-residue polypeptide: Leucine--tRNA ligase (864 aa).

The 'HIGH' region motif lies at proline 42–histidine 52. A 'KMSKS' region motif is present at residues lysine 624–serine 628. Lysine 627 contacts ATP.

The protein belongs to the class-I aminoacyl-tRNA synthetase family.

It is found in the cytoplasm. The enzyme catalyses tRNA(Leu) + L-leucine + ATP = L-leucyl-tRNA(Leu) + AMP + diphosphate. The polypeptide is Leucine--tRNA ligase (Burkholderia cenocepacia (strain HI2424)).